The sequence spans 271 residues: Autophagy-related protein 27 (271 aa).

The N-terminal stretch at 1 to 19 (MVSKTWICGFISIITVVQA) is a signal peptide. In terms of domain architecture, MRH spans 20 to 166 (LSCEKHDVLK…TLKGPSGCLK (147 aa)). Topologically, residues 20–197 (LSCEKHDVLK…KKPAKKAGGT (178 aa)) are lumenal. 3 disulfide bridges follow: cysteine 22/cysteine 60, cysteine 71/cysteine 78, and cysteine 135/cysteine 164. Positions 161–190 (PSGCLKSKDDDKKNGDGDNGKDGDNEGKKP) are disordered. Residues 166-189 (KSKDDDKKNGDGDNGKDGDNEGKK) are compositionally biased toward basic and acidic residues. Residues 198-218 (LWFTWLFLYALLFTLIYLMVV) form a helical membrane-spanning segment. Residues 219-271 (SFLNTRGGSFQDFRAEFIQRSTQFLTSLPEFCREVVSRILGRSTAQRGGYSAV) lie on the Cytoplasmic side of the membrane.

It belongs to the ATG27 family. As to quaternary structure, forms a complex with ATG9 and ATG23.

It localises to the cytoplasmic vesicle membrane. It is found in the golgi apparatus membrane. Its subcellular location is the mitochondrion membrane. The protein localises to the preautophagosomal structure membrane. In terms of biological role, effector of VPS34 phosphatidylinositol 3-phosphate kinase signaling. Regulates the cytoplasm to vacuole transport (Cvt) vesicle formation. Plays a role in ATG protein retrieval from the pre-autophagosomal structure (PAS) and is especially required for autophagy-dependent cycling of ATG9. The sequence is that of Autophagy-related protein 27 (ATG27) from Saccharomyces cerevisiae (strain YJM789) (Baker's yeast).